Reading from the N-terminus, the 164-residue chain is Superoxide dismutase [Cu-Zn] 3 (164 aa).

Cu cation is bound by residues His51, His53, and His68. Residues Cys62 and Cys151 are joined by a disulfide bond. Residues His68, His76, His85, and Asp88 each coordinate Zn(2+). His125 serves as a coordination point for Cu cation. The Peroxisome localization signal motif lies at 162 to 164 (AKL).

It belongs to the Cu-Zn superoxide dismutase family. In terms of assembly, homodimer. Cu cation serves as cofactor. It depends on Zn(2+) as a cofactor. As to expression, expressed in leaves (at protein level).

It is found in the peroxisome. It carries out the reaction 2 superoxide + 2 H(+) = H2O2 + O2. Functionally, destroys radicals which are normally produced within the cells and which are toxic to biological systems. The chain is Superoxide dismutase [Cu-Zn] 3 (CSD3) from Arabidopsis thaliana (Mouse-ear cress).